A 490-amino-acid polypeptide reads, in one-letter code: Dual specificity protein kinase CLK3 (490 aa).

Positions 1–138 (MHHCKRYRSP…SKRSSRSVED (138 aa)) are disordered. Residue Tyr-7 is modified to Phosphotyrosine. 6 positions are modified to phosphoserine: Ser-9, Ser-49, Ser-51, Ser-67, Ser-76, and Ser-78. Composition is skewed to basic and acidic residues over residues 26 to 56 (YSREHEGRLRYPSRREPPPRRSRSRSHDRIP) and 63 to 76 (EHRDSDTYRCEERS). Positions 88–116 (RSRHRRRSRERAPYRTRKHAHHCHKRRTR) are enriched in basic residues. The span at 117–130 (SCSSASSRSQQSSK) shows a compositional bias: low complexity. Ser-135 carries the phosphoserine modification. Positions 156–472 (YEIVGNLGEG…LAEALLHPFF (317 aa)) constitute a Protein kinase domain. ATP is bound by residues 162–170 (LGEGTFGKV) and Lys-186. Asp-283 functions as the Proton acceptor in the catalytic mechanism.

This sequence belongs to the protein kinase superfamily. CMGC Ser/Thr protein kinase family. Lammer subfamily. In terms of processing, autophosphorylates on all three types of residues. As to expression, present at high levels in testis and ovary. In testis, expression is restricted to elongated, maturing spermatozoa. Also present in spleen, brain, lung and liver (at protein level).

The protein localises to the nucleus. Its subcellular location is the cytoplasm. The protein resides in the cytoplasmic vesicle. It localises to the secretory vesicle. It is found in the acrosome. The catalysed reaction is L-seryl-[protein] + ATP = O-phospho-L-seryl-[protein] + ADP + H(+). The enzyme catalyses L-threonyl-[protein] + ATP = O-phospho-L-threonyl-[protein] + ADP + H(+). It catalyses the reaction L-tyrosyl-[protein] + ATP = O-phospho-L-tyrosyl-[protein] + ADP + H(+). Its activity is regulated as follows. Leucettine L41 inhibits its kinase activity and affects the regulation of alternative splicing mediated by phosphorylation of SR proteins. Its function is as follows. Dual specificity kinase acting on both serine/threonine and tyrosine-containing substrates. Phosphorylates serine- and arginine-rich (SR) proteins of the spliceosomal complex. May be a constituent of a network of regulatory mechanisms that enable SR proteins to control RNA splicing and can cause redistribution of SR proteins from speckles to a diffuse nucleoplasmic distribution. Phosphorylates SRSF1 and SRSF3. Regulates the alternative splicing of tissue factor (F3) pre-mRNA in endothelial cells. In Mus musculus (Mouse), this protein is Dual specificity protein kinase CLK3.